We begin with the raw amino-acid sequence, 87 residues long: UPF0250 protein NT01EI_2946 (87 aa).

It belongs to the UPF0250 family.

In Edwardsiella ictaluri (strain 93-146), this protein is UPF0250 protein NT01EI_2946.